We begin with the raw amino-acid sequence, 237 residues long: Tetraspanin-8 (237 aa).

Residues 1–9 (MAGVSACIK) are Cytoplasmic-facing. A helical membrane pass occupies residues 10-33 (YSMFTFNFLFWLCGILILALAIWV). At 34-57 (RVSNDSQAIFGSEDVGSSSYVAVD) the chain is on the extracellular side. A helical membrane pass occupies residues 58–72 (ILIAVGAIIMILGFL). Topologically, residues 73–83 (GCCGAIKESRC) are cytoplasmic. Residues 84–109 (MLLLFFIGLLLILLLQVATGILGAVF) form a helical membrane-spanning segment. Over 110 to 205 (KSKSDRIVNE…SFIKDFLAKN (96 aa)) the chain is Extracellular. N-linked (GlcNAc...) asparagine glycosylation occurs at Asn-118. Residues 206–230 (LIIVIGISFGLAVIEILGLVFSMVL) traverse the membrane as a helical segment. Residues 231-237 (YCQIGNK) are Cytoplasmic-facing.

The protein belongs to the tetraspanin (TM4SF) family. In terms of assembly, forms homooligomers. Interacts with MEP1B. Interacts with integrin alpha3/ITGA3. Interacts with RICTOR and MTOR. Interacts with ADAM17. Interacts with ECE1. Gastric, colon, rectal, and pancreatic carcinomas.

It is found in the cell membrane. Its function is as follows. Structural component of specialized membrane microdomains known as tetraspanin-enriched microdomains (TERMs), which act as platforms for receptor clustering and signaling. Participates thereby in diverse biological functions such as cell signal transduction, migration and protein trafficking. Promotes ADAM17-mediated TNF-alpha processing through recruitment of ADAM17 to tetraspanin-enriched micro-domains (TEMs). Forms a complex with RICTOR and integrin alpha3/ITGA3 to mediate mTORC2 activation and AKT1 phosphorylation leading to cell migration. Reduces apoptosis and autophagy induced by high glucose levels through forming a complex with mTOR and RICTOR. Contributes to the maintenance of intestinal epithelial barrier and plays a role in the regulation of intestine inflammation by switching interferon gamma receptor 1/IFNGR1 from clathrin-dependent to lipid raft-dependent endocytosis route to limit STAT1 activation magnitude and duration. Acts as a modulator of the endothelin axis by associating with endothelin converting enzyme ECE1 and regulating its activity of conversion of the endothelin-1 precursor to endothelin. This chain is Tetraspanin-8 (TSPAN8), found in Homo sapiens (Human).